Consider the following 147-residue polypeptide: 3-dehydroquinate dehydratase (147 aa).

The active-site Proton acceptor is Tyr23. Substrate is bound by residues Asn74, His80, and Asp87. His100 acts as the Proton donor in catalysis. Substrate is bound by residues 101 to 102 and Arg111; that span reads IS.

Belongs to the type-II 3-dehydroquinase family. Homododecamer.

It carries out the reaction 3-dehydroquinate = 3-dehydroshikimate + H2O. It functions in the pathway metabolic intermediate biosynthesis; chorismate biosynthesis; chorismate from D-erythrose 4-phosphate and phosphoenolpyruvate: step 3/7. Functionally, catalyzes a trans-dehydration via an enolate intermediate. The sequence is that of 3-dehydroquinate dehydratase from Prochlorococcus marinus (strain MIT 9301).